A 352-amino-acid chain; its full sequence is Homeobox protein Mohawk (352 aa).

Residues 19–53 (GASERERGGRPYSGVLDSPHARPEVGIADGPPLKD) form a disordered region. The homeobox; TALE-type DNA-binding region spans 71-132 (VRHKRQALQD…NARRRLKNTV (62 aa)). 2 disordered regions span residues 157-194 (LSVSSDDSCSEGGENPPRTHMNEGGYNTPVHHPVIKSE) and 245-272 (TRQRNHSGSFSSNEFEEELVSPSSSETE).

It belongs to the TALE/IRO homeobox family.

It is found in the nucleus. May act as a morphogenetic regulator of cell adhesion. This Pongo abelii (Sumatran orangutan) protein is Homeobox protein Mohawk (MKX).